A 612-amino-acid chain; its full sequence is Isocitrate dehydrogenase kinase/phosphatase (612 aa).

ATP contacts are provided by residues 327–333 (APGIKGL) and Lys348. Residue Asp383 is part of the active site. Residues 593-612 (AGAASNEQDAPDAGRSVRAA) form a disordered region.

The protein belongs to the AceK family.

The protein resides in the cytoplasm. It catalyses the reaction L-seryl-[isocitrate dehydrogenase] + ATP = O-phospho-L-seryl-[isocitrate dehydrogenase] + ADP + H(+). Its function is as follows. Bifunctional enzyme which can phosphorylate or dephosphorylate isocitrate dehydrogenase (IDH) on a specific serine residue. This is a regulatory mechanism which enables bacteria to bypass the Krebs cycle via the glyoxylate shunt in response to the source of carbon. When bacteria are grown on glucose, IDH is fully active and unphosphorylated, but when grown on acetate or ethanol, the activity of IDH declines drastically concomitant with its phosphorylation. This Paraburkholderia xenovorans (strain LB400) protein is Isocitrate dehydrogenase kinase/phosphatase.